The primary structure comprises 356 residues: Protein MGF 360-19R (356 aa).

The ANK repeat unit spans residues 61-93 (LLNTALMKAVQENNYELIMLFTEWGANINYGLL).

It belongs to the asfivirus MGF 360 family.

Functionally, plays a role in virus cell tropism, and may be required for efficient virus replication in macrophages. The polypeptide is Protein MGF 360-19R (African swine fever virus (isolate Pig/Kenya/KEN-50/1950) (ASFV)).